Reading from the N-terminus, the 369-residue chain is Anhydro-N-acetylmuramic acid kinase (369 aa).

Residue 12 to 19 coordinates ATP; that stretch reads GTSMDGVD.

The protein belongs to the anhydro-N-acetylmuramic acid kinase family.

It carries out the reaction 1,6-anhydro-N-acetyl-beta-muramate + ATP + H2O = N-acetyl-D-muramate 6-phosphate + ADP + H(+). Its pathway is amino-sugar metabolism; 1,6-anhydro-N-acetylmuramate degradation. The protein operates within cell wall biogenesis; peptidoglycan recycling. Functionally, catalyzes the specific phosphorylation of 1,6-anhydro-N-acetylmuramic acid (anhMurNAc) with the simultaneous cleavage of the 1,6-anhydro ring, generating MurNAc-6-P. Is required for the utilization of anhMurNAc either imported from the medium or derived from its own cell wall murein, and thus plays a role in cell wall recycling. This Shewanella amazonensis (strain ATCC BAA-1098 / SB2B) protein is Anhydro-N-acetylmuramic acid kinase.